Consider the following 355-residue polypeptide: Phosphoserine aminotransferase (355 aa).

L-glutamate is bound at residue R41. Pyridoxal 5'-phosphate contacts are provided by residues 75 to 76, W99, T147, D166, and Q189; that span reads AS. K190 carries the N6-(pyridoxal phosphate)lysine modification. 231–232 lines the pyridoxal 5'-phosphate pocket; the sequence is NT.

Belongs to the class-V pyridoxal-phosphate-dependent aminotransferase family. SerC subfamily. As to quaternary structure, homodimer. Pyridoxal 5'-phosphate serves as cofactor.

It is found in the cytoplasm. It catalyses the reaction O-phospho-L-serine + 2-oxoglutarate = 3-phosphooxypyruvate + L-glutamate. It carries out the reaction 4-(phosphooxy)-L-threonine + 2-oxoglutarate = (R)-3-hydroxy-2-oxo-4-phosphooxybutanoate + L-glutamate. It functions in the pathway amino-acid biosynthesis; L-serine biosynthesis; L-serine from 3-phospho-D-glycerate: step 2/3. Its pathway is cofactor biosynthesis; pyridoxine 5'-phosphate biosynthesis; pyridoxine 5'-phosphate from D-erythrose 4-phosphate: step 3/5. In terms of biological role, catalyzes the reversible conversion of 3-phosphohydroxypyruvate to phosphoserine and of 3-hydroxy-2-oxo-4-phosphonooxybutanoate to phosphohydroxythreonine. This is Phosphoserine aminotransferase from Parabacteroides distasonis (strain ATCC 8503 / DSM 20701 / CIP 104284 / JCM 5825 / NCTC 11152).